Consider the following 1052-residue polypeptide: P3N-PIPO polyprotein (1052 aa).

In terms of domain architecture, Peptidase S30 spans 219–362; that stretch reads KMSDQGVDML…KTMSLKIVHF (144 aa). Residues His-270, Asp-279, and Ser-313 each act as for P1 proteinase activity in the active site. The Involved in interaction with stylet and aphid transmission motif lies at 414–417; it reads KITC. The Involved in virions binding and aphid transmission motif lies at 672–674; the sequence is PTK. A Peptidase C6 domain is found at 698 to 820; that stretch reads MYIAKEGYCY…ESSLKHYRVG (123 aa). Catalysis depends on for helper component proteinase activity residues Cys-706 and His-779.

It belongs to the potyviridae P3N-PIPO polyprotein family. As to quaternary structure, interacts (via PIPO domain) with host PCaP1 protein; this interaction may help to anchor the movement complex to the plasma membrane from which the complex could move to the plasmodesmata. In terms of processing, potyviral RNA is expressed as two polyproteins which undergo post-translational proteolytic processing. Genome polyprotein is processed by NIa-pro, P1 and HC-pro proteinases resulting in the production of at least ten individual proteins. P3N-PIPO is cleaved by P1 and HC-pro proteinases resulting in the production of three individual proteins. The P1 proteinase and the HC-pro cleave only their respective C-termini autocatalytically.

Its subcellular location is the host cell junction. The protein localises to the host plasmodesma. It catalyses the reaction Hydrolyzes a Gly-|-Gly bond at its own C-terminus, commonly in the sequence -Tyr-Xaa-Val-Gly-|-Gly, in the processing of the potyviral polyprotein.. In terms of biological role, required for aphid transmission and also has proteolytic activity. Only cleaves a Gly-Gly dipeptide at its own C-terminus. Interacts with virions and aphid stylets. Acts as a suppressor of RNA-mediated gene silencing, also known as post-transcriptional gene silencing (PTGS), a mechanism of plant viral defense that limits the accumulation of viral RNAs. May have RNA-binding activity. Allows efficient cell to cell propagation, by bypassing the host cell wall barrier. Transports viral genome to neighboring plant cells directly through plasmosdesmata, without any budding. The chain is P3N-PIPO polyprotein from Turnip mosaic virus (strain Quebec) (TuMV).